The chain runs to 70 residues: Probable protein transport protein Sec61 subunit gamma (70 aa).

The Cytoplasmic portion of the chain corresponds to 1–39; the sequence is MADQIQEILDVPREFLKDGIQFIKKCQKPDRREFIKISQ. The helical transmembrane segment at 40–58 threads the bilayer; the sequence is AVGTGFLIMGAVGYLVKLI. Residues 59-70 lie on the Extracellular side of the membrane; it reads HIPLNQVLVGGA.

This sequence belongs to the SecE/SEC61-gamma family. As to quaternary structure, heterotrimeric complex composed of SEC61-alpha, SEC61-beta and SEC61-gamma.

It is found in the endoplasmic reticulum membrane. Functionally, necessary for protein translocation in the endoplasmic reticulum. The sequence is that of Probable protein transport protein Sec61 subunit gamma from Neurospora crassa (strain ATCC 24698 / 74-OR23-1A / CBS 708.71 / DSM 1257 / FGSC 987).